The following is a 473-amino-acid chain: Ral-GDS-related protein (473 aa).

The tract at residues 117-215 is disordered; sequence EPNEAKPDDP…NQPSEELPDM (99 aa). A compositionally biased stretch (low complexity) spans 134 to 157; the sequence is ALTMPALEPAPPLLADLGPALEPE. Over residues 173-185 the composition is skewed to pro residues; it reads GPAPAPGEGPPPG. Positions 219-471 constitute a Ras-GEF domain; sequence PPRLLAEQLT…YKLSCQLEPE (253 aa).

The protein resides in the cytoplasmic vesicle. The chain is Ral-GDS-related protein (RGL4) from Homo sapiens (Human).